Here is a 402-residue protein sequence, read N- to C-terminus: UPF0597 protein THA_1286 (402 aa).

This sequence belongs to the UPF0597 family.

This is UPF0597 protein THA_1286 from Thermosipho africanus (strain TCF52B).